Reading from the N-terminus, the 187-residue chain is Protein GrpE (187 aa).

A compositionally biased stretch (basic and acidic residues) spans 1–11; sequence MTDSSNEHETE. Residues 1–21 form a disordered region; the sequence is MTDSSNEHETENPSLPIPDNE.

This sequence belongs to the GrpE family. In terms of assembly, homodimer.

It localises to the cytoplasm. Functionally, participates actively in the response to hyperosmotic and heat shock by preventing the aggregation of stress-denatured proteins, in association with DnaK and GrpE. It is the nucleotide exchange factor for DnaK and may function as a thermosensor. Unfolded proteins bind initially to DnaJ; upon interaction with the DnaJ-bound protein, DnaK hydrolyzes its bound ATP, resulting in the formation of a stable complex. GrpE releases ADP from DnaK; ATP binding to DnaK triggers the release of the substrate protein, thus completing the reaction cycle. Several rounds of ATP-dependent interactions between DnaJ, DnaK and GrpE are required for fully efficient folding. This chain is Protein GrpE, found in Chlamydia caviae (strain ATCC VR-813 / DSM 19441 / 03DC25 / GPIC) (Chlamydophila caviae).